Consider the following 156-residue polypeptide: Small ribosomal subunit protein uS7 (156 aa).

Belongs to the universal ribosomal protein uS7 family. Part of the 30S ribosomal subunit. Contacts proteins S9 and S11.

Functionally, one of the primary rRNA binding proteins, it binds directly to 16S rRNA where it nucleates assembly of the head domain of the 30S subunit. Is located at the subunit interface close to the decoding center, probably blocks exit of the E-site tRNA. The chain is Small ribosomal subunit protein uS7 from Parafrankia sp. (strain EAN1pec).